A 385-amino-acid polypeptide reads, in one-letter code: Nonsense-mediated mRNA decay factor SMG9 (385 aa).

The disordered stretch occupies residues 1–32 (MKKVEILKTSRPSSAGGAARPSTASPTHGAPK).

Belongs to the SMG9 family.

Functionally, involved in nonsense-mediated decay (NMD) of mRNAs containing premature stop codons. Probable component of kinase complex containing smg-1 and recruited to stalled ribosomes. In Caenorhabditis elegans, this protein is Nonsense-mediated mRNA decay factor SMG9 (smg-9).